The primary structure comprises 321 residues: MSASAFVAVASCLAALVHGYANPGSCSGACNVHDPALIRRQSDGKYFRFSTGNKISYASSSSIQGPWTVLGSVLPSGSSINLDGKDDLWAPDVSLVNGVYHVYYSVSTFGSQSSAIGLATSSTMDLNSWTDHGSTGIQSSSSKPYNAIDANLFNDGGTYYMNFGSFWHDIYQAPMNSAATAAASSSYNIAYNPSGTHAVEGAFMYKYGSYYYLFFSAGICCGYDTSRPASGEEYKIKVCRSTSATGNFVDASGVACTNGGGTVVLESHGTVYGPGGQGVFTDPSLGPILYYHYVDTTIGYADGQKLFGWNKIDFSSGWPVV.

Positions 1-19 are cleaved as a signal peptide; sequence MSASAFVAVASCLAALVHG. Catalysis depends on Asp34, which acts as the Proton acceptor. Glu200 serves as the catalytic Proton donor.

Belongs to the glycosyl hydrolase 43 family.

It is found in the secreted. It catalyses the reaction Endohydrolysis of (1-&gt;5)-alpha-arabinofuranosidic linkages in (1-&gt;5)-arabinans.. It participates in glycan metabolism; L-arabinan degradation. Its function is as follows. Endo-1,5-alpha-L-arabinanase involved in degradation of pectin. Its preferred substrate is linear 1,5-alpha-L-arabinan. This chain is Probable arabinan endo-1,5-alpha-L-arabinosidase A (abnA), found in Neosartorya fischeri (strain ATCC 1020 / DSM 3700 / CBS 544.65 / FGSC A1164 / JCM 1740 / NRRL 181 / WB 181) (Aspergillus fischerianus).